The primary structure comprises 322 residues: NADH oxidoreductase HCR (322 aa).

The FAD-binding FR-type domain occupies 7–107 (QCPWRMQVHH…SDAMGEFTCD (101 aa)). Positions 111 to 213 (EDKFLLLAAG…APYMDWVEQE (103 aa)) are oxidoreductase. The 86-residue stretch at 237–322 (SGLKFTKLQP…CHPQGDLVLA (86 aa)) folds into the 2Fe-2S ferredoxin-type domain. Positions 273, 278, 281, and 311 each coordinate [2Fe-2S] cluster.

It in the N-terminal section; belongs to the FAD-binding oxidoreductase type 6 family. It depends on [2Fe-2S] cluster as a cofactor. The cofactor is FAD.

In terms of biological role, NADH oxidoreductase acting in concert with HCP. The sequence is that of NADH oxidoreductase HCR (hcr) from Escherichia coli (strain K12).